We begin with the raw amino-acid sequence, 268 residues long: Ribosomal RNA small subunit methyltransferase A (268 aa).

Asn-16, Leu-18, Gly-43, Glu-64, Asp-89, and Asn-110 together coordinate S-adenosyl-L-methionine.

Belongs to the class I-like SAM-binding methyltransferase superfamily. rRNA adenine N(6)-methyltransferase family. RsmA subfamily.

It is found in the cytoplasm. The enzyme catalyses adenosine(1518)/adenosine(1519) in 16S rRNA + 4 S-adenosyl-L-methionine = N(6)-dimethyladenosine(1518)/N(6)-dimethyladenosine(1519) in 16S rRNA + 4 S-adenosyl-L-homocysteine + 4 H(+). Its function is as follows. Specifically dimethylates two adjacent adenosines (A1518 and A1519) in the loop of a conserved hairpin near the 3'-end of 16S rRNA in the 30S particle. May play a critical role in biogenesis of 30S subunits. This chain is Ribosomal RNA small subunit methyltransferase A, found in Pseudomonas savastanoi pv. phaseolicola (strain 1448A / Race 6) (Pseudomonas syringae pv. phaseolicola (strain 1448A / Race 6)).